Consider the following 267-residue polypeptide: Cyclin-C (267 aa).

Residues isoleucine 48–isoleucine 151 enclose the Cyclin N-terminal domain.

This sequence belongs to the cyclin family. Cyclin C subfamily. In terms of assembly, component of the Cdk8 module of the Mediator complex, composed of CycC, Cdk8, kto and skd.

The protein resides in the nucleus. In terms of biological role, component of the Mediator complex, a coactivator involved in regulated gene transcription of nearly all RNA polymerase II-dependent genes. Mediator functions as a bridge to convey information from gene-specific regulatory proteins to the basal RNA polymerase II transcription machinery. Mediator is recruited to promoters by direct interactions with regulatory proteins and serves as a scaffold for the assembly of a functional preinitiation complex with RNA polymerase II and the general transcription factors. Binds to and activates cyclin-dependent kinase Cdk8 that phosphorylates the CTD (C-terminal domain) of the large subunit of RNA polymerase II (RNAp II), which may inhibit the formation of a transcription initiation complex. Required for leg and eye development and macrochaete specification or differentiation. The protein is Cyclin-C (CycC) of Drosophila melanogaster (Fruit fly).